Reading from the N-terminus, the 153-residue chain is MVATLFIDADACPVKDEAYKVAARHGYKTFVVSNSWIRVPATPVIEQIVVDAGPDVADDWIAERCGPGDVVVTNDIPLADRVLKAGGAAVAPNGRVFSHDMIGSALASRSIGEHLRSMGEVTKGPAAFANADRSRFLQALDQLVVKAKRAAPR.

This sequence belongs to the UPF0178 family.

The polypeptide is UPF0178 protein CC_1215 (Caulobacter vibrioides (strain ATCC 19089 / CIP 103742 / CB 15) (Caulobacter crescentus)).